Here is a 209-residue protein sequence, read N- to C-terminus: Vacuolar protein sorting-associated protein 28 homolog 1 (209 aa).

In terms of domain architecture, VPS28 N-terminal spans 1 to 99 (MEVKLWNDKR…TSGVPATVEH (99 aa)). A VPS28 C-terminal domain is found at 109–205 (SSASVVAECV…SYNSFMAALP (97 aa)).

The protein belongs to the VPS28 family. Component of the endosomal sorting required for transport complex I (ESCRT-I), composed of ELC, VPS28 and VPS37. Interacts with ELC.

The protein localises to the endosome. Functionally, component of the ESCRT-I complex (endosomal sorting complex required for transport I), a regulator of vesicular trafficking process. Required for the sorting of endocytic ubiquitinated cargos into multivesicular bodies (MVBs). Mediates the association to the ESCRT-0 complex. The protein is Vacuolar protein sorting-associated protein 28 homolog 1 (VPS28-1) of Arabidopsis thaliana (Mouse-ear cress).